The sequence spans 483 residues: 6-phosphogluconate dehydrogenase, decarboxylating (483 aa).

Residues 10–15 (GLAVMG) and 33–35 (NRT) each bind NADP(+). K38 is modified (N6-acetyllysine). At S57 the chain carries Phosphoserine. An N6-acetyllysine modification is found at K59. NADP(+) contacts are provided by residues 75-77 (VKA) and N103. Substrate is bound by residues N103 and 129 to 131 (SGG). The residue at position 129 (S129) is a Phosphoserine. K184 functions as the Proton acceptor in the catalytic mechanism. Position 187-188 (187-188 (HN)) interacts with substrate. E191 functions as the Proton donor in the catalytic mechanism. 5 residues coordinate substrate: Y192, K261, R288, R447, and H453. 478–481 (SSSY) is a binding site for NADP(+).

The protein belongs to the 6-phosphogluconate dehydrogenase family. Homodimer.

It is found in the cytoplasm. It carries out the reaction 6-phospho-D-gluconate + NADP(+) = D-ribulose 5-phosphate + CO2 + NADPH. Its pathway is carbohydrate degradation; pentose phosphate pathway; D-ribulose 5-phosphate from D-glucose 6-phosphate (oxidative stage): step 3/3. In terms of biological role, catalyzes the oxidative decarboxylation of 6-phosphogluconate to ribulose 5-phosphate and CO(2), with concomitant reduction of NADP to NADPH. This Rattus norvegicus (Rat) protein is 6-phosphogluconate dehydrogenase, decarboxylating.